Consider the following 266-residue polypeptide: Integral membrane protein 2B (266 aa).

Over 1 to 54 (MVKVTFNSALAQKEAKKDEPKSGEEALIIPPDAVAVDCKDPDDVVPVGQRRAWC) the chain is Cytoplasmic. The chain crosses the membrane as a helical; Signal-anchor for type II membrane protein span at residues 55-75 (WCMCFGLAFMLAGVILGGAYL). The Lumenal portion of the chain corresponds to 76–266 (YKYFALQPDD…KFAVETLICS (191 aa)). The necessary for interaction with APP and inhibitor effects on APP processing stretch occupies residues 102-134 (EPSADAPAALYQTIEENIKIFEEEEVEFISVPV). The BRICHOS domain maps to 137-231 (FADSDPANIV…LCHDKETYKL (95 aa)). 2 disulfide bridges follow: Cys-164/Cys-223 and Cys-248/Cys-265. N-linked (GlcNAc...) asparagine glycosylation is present at Asn-170.

It belongs to the ITM2 family. As to quaternary structure, homodimer; disulfide-linked. Interacts with SPPL2A and SPPL2B. Interacts with APP. Mature BRI2 (mBRI2) interacts with the APP amyloid-beta A4 protein; the interaction occurs at the cell surface and in the endocytic compartments and enable alpha- and beta-secretase-induced APP cleavage inhibition. Mature BRI2 (mBRI2) interacts with the APP C99; the interaction occurs in the endocytic compartments and enable gamma-secretase-induced C99 cleavage inhibition. May form heterodimers with Bri23 peptide and APP amyloid-beta protein 40. Interacts with ADAM7 in sperm; the interaction increases following capacitation. The ectodomain C-terminal part of the imBRI2 is processed by furin producing a secreted Bri23 peptide and a mature BRI2, membrane form (mBRI2). The remaining part of the ectodomain of mBRI2 containing the BRICHOS domain is cleaved by ADAM10 and is secreted (BRI2C, soluble form). The membrane-bound N-terminal fragment (BRI2C, membrane form) is further proteolytically processed by SPPL2A and SPPL2B through regulated intramembrane proteolysis producing a secreted C-peptide and a BRI2 intracellular domain (BRI2 ICD) released in the cytosol. Shedding by ADAM10 facilitates intramembrane cleavage but is not absolutely required for BRI2 ICD generation. In terms of processing, glycosylation at Asn-170 is important for cell surface localization, but doesn't affect furin- and ADAM10-induced proteolytic processing. Ubiquitous. Expressed in brain.

Its subcellular location is the golgi apparatus membrane. The protein resides in the cell membrane. It localises to the endosome membrane. The protein localises to the secreted. Plays a regulatory role in the processing of the amyloid-beta A4 precursor protein (APP) and acts as an inhibitor of the amyloid-beta peptide aggregation and fibrils deposition. Plays a role in the induction of neurite outgrowth. Functions as a protease inhibitor by blocking access of secretases to APP cleavage sites. Functionally, mature BRI2 (mBRI2) functions as a modulator of the amyloid-beta A4 precursor protein (APP) processing leading to a strong reduction in the secretion of secretase-processed amyloid-beta protein 40 and amyloid-beta protein 42. Its function is as follows. Bri23 peptide prevents aggregation of APP amyloid-beta protein 42 into toxic oligomers. This is Integral membrane protein 2B (ITM2B) from Homo sapiens (Human).